We begin with the raw amino-acid sequence, 351 residues long: Glycerol-1-phosphate dehydrogenase [NAD(P)+] (351 aa).

Residues 97 to 101 and 119 to 122 each bind NAD(+); these read GTVID and TSPS. Aspartate 124 lines the substrate pocket. Serine 128 serves as a coordination point for NAD(+). A substrate-binding site is contributed by aspartate 171. Zn(2+) contacts are provided by aspartate 171 and histidine 251. Histidine 255 contributes to the substrate binding site. Histidine 267 is a Zn(2+) binding site.

The protein belongs to the glycerol-1-phosphate dehydrogenase family. As to quaternary structure, homodimer. The cofactor is Zn(2+).

The protein resides in the cytoplasm. It carries out the reaction sn-glycerol 1-phosphate + NAD(+) = dihydroxyacetone phosphate + NADH + H(+). The catalysed reaction is sn-glycerol 1-phosphate + NADP(+) = dihydroxyacetone phosphate + NADPH + H(+). Its pathway is membrane lipid metabolism; glycerophospholipid metabolism. In terms of biological role, catalyzes the NAD(P)H-dependent reduction of dihydroxyacetonephosphate (DHAP or glycerone phosphate) to glycerol 1-phosphate (G1P). The G1P thus generated is used as the glycerophosphate backbone of phospholipids in the cellular membranes of Archaea. This chain is Glycerol-1-phosphate dehydrogenase [NAD(P)+], found in Sulfolobus acidocaldarius (strain ATCC 33909 / DSM 639 / JCM 8929 / NBRC 15157 / NCIMB 11770).